A 642-amino-acid chain; its full sequence is MSTKIEQLEFQAETRQLLDLMIHSVYSNKDSFLRELISNASDALDKLRLEAFRNKELHVDTSDLHVEIEVDAEKRTLTVRDNGIGMSHDEVVDLIGTLAKSGTADLRRKLKEAKDAAASEELIGQFGIGFYSTFMVADKVTLLTRKAGESEATRWESSGEATYTIEAVDDAPQGSSVTLHLKPEDAEDHLHDYTSERKIKELVKRYSDFIAWPIRMNVERTVPAEGDGEDEVTTTSETINSMKALWARSKDDVSEDEYKEFYKHIAHAWDDPLEVIPMKAEGTFEFQALLFIPSHAPFDLFMRDGKTGVQLYVKRVFIMDDCDQLMPEYLRFVKGVVDAQDLSLNVSREILQQDRQIRAIRRRLTKKVLTTIKDLKTERPDDYRTFWAEFGRAVKEGLMSDTDNRDVLLGISSFASTHSEEELTSLEDYVARMKDGQEQIFYATGESRQLLESSPHMEAFRAKGFEVLLLTDPVDEMWVGAVPEFDGKSFQSIAKGEVDLDTEEDKKAHESEREEQEKDFAGLLSWMADALSEQVKEVRLSTRLTTSPACIVGDAFSMSPALERMYRASGQPVPVTKRILELNPTHPLVTGLREAHGERNEDPALGETAELLYGMALLAEGGELEDPARFTTMLANRLARTV.

The a; substrate-binding stretch occupies residues 1–348 (MSTKIEQLEF…AQDLSLNVSR (348 aa)). The interval 349-564 (EILQQDRQIR…AFSMSPALER (216 aa)) is b. Residues 565–642 (MYRASGQPVP…MLANRLARTV (78 aa)) form a c region.

The protein belongs to the heat shock protein 90 family. As to quaternary structure, homodimer.

Its subcellular location is the cytoplasm. Its function is as follows. Molecular chaperone. Has ATPase activity. The sequence is that of Chaperone protein HtpG from Rhodococcus jostii (strain RHA1).